The chain runs to 201 residues: uncharacterized protein (201 aa).

Positions 15–122 (KNQIQFSTFN…EVLPQIRKTG (108 aa)) constitute a Bro-N domain.

This is an uncharacterized protein from Haemophilus influenzae (strain ATCC 51907 / DSM 11121 / KW20 / Rd).